A 1132-amino-acid chain; its full sequence is APC membrane recruitment protein 1 (1132 aa).

Methionine 1 is subject to N-acetylmethionine. The segment covering methionine 1 to glutamine 21 has biased composition (polar residues). Disordered regions lie at residues methionine 1–asparagine 256, phenylalanine 268–asparagine 301, serine 338–asparagine 423, glycine 469–glutamate 505, threonine 674–tryptophan 699, methionine 736–threonine 770, glutamate 924–leucine 949, and serine 1038–lysine 1132. The segment covering glycine 24–glutamate 35 has biased composition (basic and acidic residues). Low complexity predominate over residues serine 121–alanine 133. Composition is skewed to basic and acidic residues over residues lysine 195 to valine 208, glutamate 218 to lysine 229, and glutamate 281 to glycine 290. A compositionally biased stretch (acidic residues) spans alanine 372–asparagine 423. Composition is skewed to polar residues over residues threonine 475 to asparagine 486 and glycine 677 to glutamate 696. Acidic residues-rich tracts occupy residues glutamate 756–lysine 765 and aspartate 931–glycine 941. Composition is skewed to polar residues over residues serine 1059–alanine 1072 and alanine 1115–lysine 1132.

The protein belongs to the Amer family. As to quaternary structure, interacts with CTNNB1, AXIN1, LRP6, KEAP1, APC and BTRC. Interacts with SCF (SKP1-CUL1-F-box protein) E3 ubiquitin-protein ligase complexes containing BTRC and/or FBXW11. Identified in the beta-catenin destruction complex containing CTNNB1, APC, AXIN1 and AXIN2. Interacts with WT1. In terms of tissue distribution, expressed in kidney.

Its subcellular location is the cytoplasm. The protein localises to the cell membrane. It is found in the nucleus. Its function is as follows. Regulator of the canonical Wnt signaling pathway. Acts by specifically binding phosphatidylinositol 4,5-bisphosphate (PtdIns(4,5)P2), translocating to the cell membrane and interacting with key regulators of the canonical Wnt signaling pathway, such as components of the beta-catenin destruction complex. Acts both as a positive and negative regulator of the Wnt signaling pathway, depending on the context: acts as a positive regulator by promoting LRP6 phosphorylation. Also acts as a negative regulator by acting as a scaffold protein for the beta-catenin destruction complex and promoting stabilization of Axin at the cell membrane. Promotes CTNNB1 ubiquitination and degradation. Involved in kidney development. The polypeptide is APC membrane recruitment protein 1 (Amer1) (Mus musculus (Mouse)).